Here is a 554-residue protein sequence, read N- to C-terminus: Hydroxylamine reductase (554 aa).

The [2Fe-2S] cluster site is built by Cys3, Cys6, Cys18, and Cys25. Hybrid [4Fe-2O-2S] cluster contacts are provided by His252, Glu276, Cys320, Cys408, Cys436, Cys461, Glu495, and Lys497. At Cys408 the chain carries Cysteine persulfide.

Belongs to the HCP family. [2Fe-2S] cluster serves as cofactor. Requires hybrid [4Fe-2O-2S] cluster as cofactor.

It is found in the cytoplasm. It carries out the reaction A + NH4(+) + H2O = hydroxylamine + AH2 + H(+). Catalyzes the reduction of hydroxylamine to form NH(3) and H(2)O. This Shewanella putrefaciens (strain CN-32 / ATCC BAA-453) protein is Hydroxylamine reductase.